The following is a 734-amino-acid chain: Photosystem I P700 chlorophyll a apoprotein A2 (734 aa).

Transmembrane regions (helical) follow at residues 46 to 69, 135 to 158, 175 to 199, 273 to 291, 330 to 353, 369 to 395, 417 to 439, and 517 to 535; these read IFAS…FHVA, LYRG…LHLQ, LNHH…HVAI, IAHH…GHMY, LHFQ…QHMY, AALY…IFFI, AIIS…LYVH, and FLVH…LILV. Positions 559 and 568 each coordinate [4Fe-4S] cluster. Transmembrane regions (helical) follow at residues 575 to 596 and 643 to 665; these read AFYL…YWHW and LSVW…MFLI. Residues His-654, Met-662, and Tyr-670 each contribute to the chlorophyll a site. Trp-671 is a phylloquinone binding site. A helical transmembrane segment spans residues 707–727; the sequence is LVGLSHFSVGYIFTYAAFLIA.

Belongs to the PsaA/PsaB family. In terms of assembly, the PsaA/B heterodimer binds the P700 chlorophyll special pair and subsequent electron acceptors. PSI consists of a core antenna complex that captures photons, and an electron transfer chain that converts photonic excitation into a charge separation. The eukaryotic PSI reaction center is composed of at least 11 subunits. Requires P700 is a chlorophyll a/chlorophyll a' dimer, A0 is one or more chlorophyll a, A1 is one or both phylloquinones and FX is a shared 4Fe-4S iron-sulfur center. as cofactor.

The protein localises to the plastid. It localises to the chloroplast thylakoid membrane. The catalysed reaction is reduced [plastocyanin] + hnu + oxidized [2Fe-2S]-[ferredoxin] = oxidized [plastocyanin] + reduced [2Fe-2S]-[ferredoxin]. In terms of biological role, psaA and PsaB bind P700, the primary electron donor of photosystem I (PSI), as well as the electron acceptors A0, A1 and FX. PSI is a plastocyanin-ferredoxin oxidoreductase, converting photonic excitation into a charge separation, which transfers an electron from the donor P700 chlorophyll pair to the spectroscopically characterized acceptors A0, A1, FX, FA and FB in turn. Oxidized P700 is reduced on the lumenal side of the thylakoid membrane by plastocyanin. The protein is Photosystem I P700 chlorophyll a apoprotein A2 of Chara vulgaris (Common stonewort).